The primary structure comprises 373 residues: 4-hydroxy-3-methylbut-2-en-1-yl diphosphate synthase (flavodoxin) (373 aa).

4 residues coordinate [4Fe-4S] cluster: Cys270, Cys273, Cys305, and Glu312.

This sequence belongs to the IspG family. It depends on [4Fe-4S] cluster as a cofactor.

The catalysed reaction is (2E)-4-hydroxy-3-methylbut-2-enyl diphosphate + oxidized [flavodoxin] + H2O + 2 H(+) = 2-C-methyl-D-erythritol 2,4-cyclic diphosphate + reduced [flavodoxin]. It participates in isoprenoid biosynthesis; isopentenyl diphosphate biosynthesis via DXP pathway; isopentenyl diphosphate from 1-deoxy-D-xylulose 5-phosphate: step 5/6. In terms of biological role, converts 2C-methyl-D-erythritol 2,4-cyclodiphosphate (ME-2,4cPP) into 1-hydroxy-2-methyl-2-(E)-butenyl 4-diphosphate. The chain is 4-hydroxy-3-methylbut-2-en-1-yl diphosphate synthase (flavodoxin) from Klebsiella pneumoniae (strain 342).